A 600-amino-acid polypeptide reads, in one-letter code: Proline--tRNA ligase (600 aa).

The protein belongs to the class-II aminoacyl-tRNA synthetase family. ProS type 1 subfamily. As to quaternary structure, homodimer.

It is found in the cytoplasm. The catalysed reaction is tRNA(Pro) + L-proline + ATP = L-prolyl-tRNA(Pro) + AMP + diphosphate. In terms of biological role, catalyzes the attachment of proline to tRNA(Pro) in a two-step reaction: proline is first activated by ATP to form Pro-AMP and then transferred to the acceptor end of tRNA(Pro). As ProRS can inadvertently accommodate and process non-cognate amino acids such as alanine and cysteine, to avoid such errors it has two additional distinct editing activities against alanine. One activity is designated as 'pretransfer' editing and involves the tRNA(Pro)-independent hydrolysis of activated Ala-AMP. The other activity is designated 'posttransfer' editing and involves deacylation of mischarged Ala-tRNA(Pro). The misacylated Cys-tRNA(Pro) is not edited by ProRS. This is Proline--tRNA ligase from Prochlorococcus marinus (strain MIT 9515).